Here is a 338-residue protein sequence, read N- to C-terminus: Glyceraldehyde-3-phosphate dehydrogenase (338 aa).

5 residues coordinate NAD(+): arginine 13, isoleucine 14, aspartate 35, arginine 80, and serine 123. D-glyceraldehyde 3-phosphate-binding residues include serine 152, cysteine 153, threonine 154, threonine 183, arginine 198, threonine 212, glycine 213, and arginine 235. Cysteine 153 acts as the Nucleophile in catalysis. Asparagine 317 is a binding site for NAD(+).

Belongs to the glyceraldehyde-3-phosphate dehydrogenase family. In terms of assembly, homotetramer.

The protein localises to the tegument membrane. It carries out the reaction D-glyceraldehyde 3-phosphate + phosphate + NAD(+) = (2R)-3-phospho-glyceroyl phosphate + NADH + H(+). Its pathway is carbohydrate degradation; glycolysis; pyruvate from D-glyceraldehyde 3-phosphate: step 1/5. In terms of biological role, this antigen is associated with human resistance to schistosomiasis. The chain is Glyceraldehyde-3-phosphate dehydrogenase from Schistosoma mansoni (Blood fluke).